Reading from the N-terminus, the 271-residue chain is Calcium-binding protein 4 (271 aa).

Residues 1 to 105 (MATEHNVQLV…RSDPQQDAAQ (105 aa)) are disordered. A Phosphoserine; by PKC/PRKCZ modification is found at serine 37. Low complexity predominate over residues 45-67 (GSQKASSGDQSSSQGSEASGSSK). Residues 87–96 (ASHRHSHRHR) show a composition bias toward basic residues. 4 consecutive EF-hand domains span residues 125–160 (EELEELQAAFEEFDTDQDGYIGYRELGDCMRTLGYM), 179–196 (GFVDFEEFVELISPKLRE), 202–237 (LGVRELRIAFREFDKDRDGRITVAELRQAAPALLGE), and 239–271 (LEGTELDEMLREMDLNGDGTIDFDEFVMMLSTG). The Ca(2+) site is built by aspartate 138, aspartate 140, aspartate 142, tyrosine 144, and glutamate 149. Ca(2+) contacts are provided by aspartate 215, aspartate 217, aspartate 219, arginine 221, glutamate 226, aspartate 252, asparagine 254, aspartate 256, threonine 258, and glutamate 263.

As to quaternary structure, interacts with CACNA1F and CACNA1D (via IQ domain) in a calcium independent manner. Interacts (via N-terminus) with UNC119. Post-translationally, phosphorylated. Phosphorylation levels change with the light conditions and regulate the activity, but has no effect on calcium binding. As to expression, expressed in retina and in the inner hair cells (IHC) of the cochlea.

It localises to the cytoplasm. Its subcellular location is the presynapse. In terms of biological role, involved in normal synaptic function through regulation of Ca(2+) influx and neurotransmitter release in photoreceptor synaptic terminals and in auditory transmission. Modulator of CACNA1D and CACNA1F, suppressing the calcium-dependent inactivation and shifting the activation range to more hyperpolarized voltages. The chain is Calcium-binding protein 4 (Cabp4) from Mus musculus (Mouse).